The sequence spans 163 residues: NADH-quinone oxidoreductase subunit I (163 aa).

2 4Fe-4S ferredoxin-type domains span residues 54–84 and 94–123; these read LRRY…IDSA and TRYD…ETHI. Residues cysteine 64, cysteine 67, cysteine 70, cysteine 74, cysteine 103, cysteine 106, cysteine 109, and cysteine 113 each coordinate [4Fe-4S] cluster.

This sequence belongs to the complex I 23 kDa subunit family. NDH-1 is composed of 14 different subunits. Subunits NuoA, H, J, K, L, M, N constitute the membrane sector of the complex. The cofactor is [4Fe-4S] cluster.

The protein resides in the cell inner membrane. It carries out the reaction a quinone + NADH + 5 H(+)(in) = a quinol + NAD(+) + 4 H(+)(out). Its function is as follows. NDH-1 shuttles electrons from NADH, via FMN and iron-sulfur (Fe-S) centers, to quinones in the respiratory chain. The immediate electron acceptor for the enzyme in this species is believed to be ubiquinone. Couples the redox reaction to proton translocation (for every two electrons transferred, four hydrogen ions are translocated across the cytoplasmic membrane), and thus conserves the redox energy in a proton gradient. In Xanthomonas oryzae pv. oryzae (strain KACC10331 / KXO85), this protein is NADH-quinone oxidoreductase subunit I.